The following is a 231-amino-acid chain: 5'-methylthioadenosine/S-adenosylhomocysteine nucleosidase (231 aa).

Catalysis depends on Glu12, which acts as the Proton acceptor. Substrate contacts are provided by residues Gly78, Val153, and 174-175 (ME). Asp198 serves as the catalytic Proton donor.

Belongs to the PNP/UDP phosphorylase family. MtnN subfamily.

It catalyses the reaction S-adenosyl-L-homocysteine + H2O = S-(5-deoxy-D-ribos-5-yl)-L-homocysteine + adenine. The enzyme catalyses S-methyl-5'-thioadenosine + H2O = 5-(methylsulfanyl)-D-ribose + adenine. It carries out the reaction 5'-deoxyadenosine + H2O = 5-deoxy-D-ribose + adenine. It functions in the pathway amino-acid biosynthesis; L-methionine biosynthesis via salvage pathway; S-methyl-5-thio-alpha-D-ribose 1-phosphate from S-methyl-5'-thioadenosine (hydrolase route): step 1/2. Functionally, catalyzes the irreversible cleavage of the glycosidic bond in both 5'-methylthioadenosine (MTA) and S-adenosylhomocysteine (SAH/AdoHcy) to adenine and the corresponding thioribose, 5'-methylthioribose and S-ribosylhomocysteine, respectively. Also cleaves 5'-deoxyadenosine, a toxic by-product of radical S-adenosylmethionine (SAM) enzymes, into 5-deoxyribose and adenine. The protein is 5'-methylthioadenosine/S-adenosylhomocysteine nucleosidase of Vibrio vulnificus (strain YJ016).